Consider the following 165-residue polypeptide: Nucleotide-binding protein CHY_1197 (165 aa).

Belongs to the YajQ family.

Its function is as follows. Nucleotide-binding protein. The sequence is that of Nucleotide-binding protein CHY_1197 from Carboxydothermus hydrogenoformans (strain ATCC BAA-161 / DSM 6008 / Z-2901).